The chain runs to 204 residues: Holliday junction branch migration complex subunit RuvA (204 aa).

The interval 1–64 (MIGRLRGIIL…EDAQLLFGFN (64 aa)) is domain I. Residues 65-143 (SKPERALFRE…GMHGDLFASD (79 aa)) are domain II. Positions 144–155 (APFALTSEMPKE) are flexible linker. The tract at residues 156-204 (TANDAEGEAVAALTALGYKPQEASRMIVKVGKPDADCETLIREALRAAI) is domain III.

Belongs to the RuvA family. As to quaternary structure, homotetramer. Forms an RuvA(8)-RuvB(12)-Holliday junction (HJ) complex. HJ DNA is sandwiched between 2 RuvA tetramers; dsDNA enters through RuvA and exits via RuvB. An RuvB hexamer assembles on each DNA strand where it exits the tetramer. Each RuvB hexamer is contacted by two RuvA subunits (via domain III) on 2 adjacent RuvB subunits; this complex drives branch migration. In the full resolvosome a probable DNA-RuvA(4)-RuvB(12)-RuvC(2) complex forms which resolves the HJ.

It localises to the cytoplasm. Functionally, the RuvA-RuvB-RuvC complex processes Holliday junction (HJ) DNA during genetic recombination and DNA repair, while the RuvA-RuvB complex plays an important role in the rescue of blocked DNA replication forks via replication fork reversal (RFR). RuvA specifically binds to HJ cruciform DNA, conferring on it an open structure. The RuvB hexamer acts as an ATP-dependent pump, pulling dsDNA into and through the RuvAB complex. HJ branch migration allows RuvC to scan DNA until it finds its consensus sequence, where it cleaves and resolves the cruciform DNA. In Erwinia tasmaniensis (strain DSM 17950 / CFBP 7177 / CIP 109463 / NCPPB 4357 / Et1/99), this protein is Holliday junction branch migration complex subunit RuvA.